The following is a 151-amino-acid chain: UPF0178 protein amb2838 (151 aa).

This sequence belongs to the UPF0178 family.

The sequence is that of UPF0178 protein amb2838 from Paramagnetospirillum magneticum (strain ATCC 700264 / AMB-1) (Magnetospirillum magneticum).